The following is a 283-amino-acid chain: Pantothenate synthetase (283 aa).

ATP is bound at residue 34-41 (MGALHDGH). The active-site Proton donor is the His-41. Gln-65 contributes to the (R)-pantoate binding site. Beta-alanine is bound at residue Gln-65. 152–155 (GEKD) contributes to the ATP binding site. Residue Gln-158 participates in (R)-pantoate binding. ATP contacts are provided by residues Val-181 and 189–192 (MSSR).

Belongs to the pantothenate synthetase family. In terms of assembly, homodimer.

It is found in the cytoplasm. The enzyme catalyses (R)-pantoate + beta-alanine + ATP = (R)-pantothenate + AMP + diphosphate + H(+). It participates in cofactor biosynthesis; (R)-pantothenate biosynthesis; (R)-pantothenate from (R)-pantoate and beta-alanine: step 1/1. In terms of biological role, catalyzes the condensation of pantoate with beta-alanine in an ATP-dependent reaction via a pantoyl-adenylate intermediate. This Bradyrhizobium sp. (strain BTAi1 / ATCC BAA-1182) protein is Pantothenate synthetase.